The primary structure comprises 341 residues: Ribosomal RNA small subunit methyltransferase H (341 aa).

Residues 47–49 (GGY), D64, F91, D109, and Q116 each bind S-adenosyl-L-methionine. Residues 292 to 319 (VAASEEEASRNPRARSAKLRAGVRTEAP) form a disordered region.

This sequence belongs to the methyltransferase superfamily. RsmH family.

Its subcellular location is the cytoplasm. The enzyme catalyses cytidine(1402) in 16S rRNA + S-adenosyl-L-methionine = N(4)-methylcytidine(1402) in 16S rRNA + S-adenosyl-L-homocysteine + H(+). Functionally, specifically methylates the N4 position of cytidine in position 1402 (C1402) of 16S rRNA. The sequence is that of Ribosomal RNA small subunit methyltransferase H from Rhizobium meliloti (strain 1021) (Ensifer meliloti).